Reading from the N-terminus, the 189-residue chain is GTPase NRas (189 aa).

Residues glycine 10–alanine 18 and valine 29–aspartate 30 each bind GTP. The short motif at tyrosine 32 to tyrosine 40 is the Effector region element. Aspartate 57–glutamine 61 is a GTP binding site. Phosphoserine is present on serine 89. Residue asparagine 116 to aspartate 119 coordinates GTP. The tract at residues tyrosine 166 to serine 185 is hypervariable region. Lysine 170 is covalently cross-linked (Glycyl lysine isopeptide (Lys-Gly) (interchain with G-Cter in ubiquitin)). Cysteine 181 carries S-palmitoyl cysteine lipidation. Cysteine 186 carries the S-farnesyl cysteine lipid modification. The propeptide at alanine 187–methionine 189 is removed in mature form.

Belongs to the small GTPase superfamily. Ras family. As to quaternary structure, interacts (active GTP-bound form preferentially) with RGS14. Interacts (active GTP-bound form) with RASSF7. Interacts (active GTP-bound form) with both SHOC2 and PP1c (all isoforms) to form a tertiary complex; SHOC2 and PP1c preferably bind M-Ras/MRAS, but they also bind K-Ras/KRAS, N-Ras/NRAS and H-Ras/HRAS. In terms of processing, palmitoylated by the ZDHHC9-GOLGA7 complex. Depalmitoylated by ABHD17A, ABHD17B and ABHD17C. A continuous cycle of de- and re-palmitoylation regulates rapid exchange between plasma membrane and Golgi. Acetylation at Lys-104 prevents interaction with guanine nucleotide exchange factors (GEFs). Post-translationally, ubiquitinated by the BCR(LZTR1) E3 ubiquitin ligase complex at Lys-170 in a non-degradative manner, leading to inhibit Ras signaling by decreasing Ras association with membranes. In terms of processing, phosphorylation at Ser-89 enhances NRAS association with its downstream effectors.

It localises to the cell membrane. Its subcellular location is the golgi apparatus membrane. It carries out the reaction GTP + H2O = GDP + phosphate + H(+). With respect to regulation, alternates between an inactive form bound to GDP and an active form bound to GTP. Activated by a guanine nucleotide-exchange factor (GEF) and inactivated by a GTPase-activating protein (GAP). In terms of biological role, ras proteins bind GDP/GTP and possess intrinsic GTPase activity. This Monodelphis domestica (Gray short-tailed opossum) protein is GTPase NRas (NRAS).